A 290-amino-acid polypeptide reads, in one-letter code: Acetylglutamate kinase (290 aa).

Substrate is bound by residues 60-61 (GG), R82, and N185.

This sequence belongs to the acetylglutamate kinase family. ArgB subfamily.

The protein resides in the cytoplasm. It catalyses the reaction N-acetyl-L-glutamate + ATP = N-acetyl-L-glutamyl 5-phosphate + ADP. It functions in the pathway amino-acid biosynthesis; L-arginine biosynthesis; N(2)-acetyl-L-ornithine from L-glutamate: step 2/4. In terms of biological role, catalyzes the ATP-dependent phosphorylation of N-acetyl-L-glutamate. The protein is Acetylglutamate kinase of Archaeoglobus fulgidus (strain ATCC 49558 / DSM 4304 / JCM 9628 / NBRC 100126 / VC-16).